The following is a 232-amino-acid chain: Putative ABC transporter ATP-binding protein VNG_2317G (232 aa).

The region spanning 2 to 231 is the ABC transporter domain; that stretch reads LSVRNLVHRY…GALPDAGVRP (230 aa). 34–41 serves as a coordination point for ATP; it reads GANGSGKT.

It belongs to the ABC transporter superfamily.

The protein localises to the cell membrane. Functionally, probably part of an ABC transporter complex. Responsible for energy coupling to the transport system. This Halobacterium salinarum (strain ATCC 700922 / JCM 11081 / NRC-1) (Halobacterium halobium) protein is Putative ABC transporter ATP-binding protein VNG_2317G.